Here is an 807-residue protein sequence, read N- to C-terminus: Spondin-1 (807 aa).

The N-terminal stretch at 1–28 (MRLSPVLLRLSRGPALLALALPLAVALA) is a signal peptide. The 166-residue stretch at 29-194 (FSDETLDKVP…DSTFDGVTDK (166 aa)) folds into the Reelin domain. 17 cysteine pairs are disulfide-bonded: cysteine 44-cysteine 128, cysteine 156-cysteine 182, cysteine 199-cysteine 336, cysteine 200-cysteine 340, cysteine 202-cysteine 415, cysteine 443-cysteine 480, cysteine 454-cysteine 489, cysteine 459-cysteine 494, cysteine 502-cysteine 538, cysteine 513-cysteine 517, cysteine 548-cysteine 554, cysteine 559-cysteine 595, cysteine 570-cysteine 574, cysteine 605-cysteine 610, cysteine 615-cysteine 650, cysteine 626-cysteine 630, and cysteine 660-cysteine 665. The 194-residue stretch at 195-388 (PILDCCACGT…LTSLDHPQSP (194 aa)) folds into the Spondin domain. Residue asparagine 214 is glycosylated (N-linked (GlcNAc...) asparagine). 3 residues coordinate Ca(2+): aspartate 325, aspartate 354, and aspartate 358. 6 consecutive TSP type-1 domains span residues 442–495 (TCIY…PGCS), 501–555 (TCTM…EECS), 558–611 (SCLT…PECH), 614–666 (PCLL…PECP), 668–721 (DCEL…RKCL), and 754–806 (GCRM…NVHP). N-linked (GlcNAc...) asparagine glycosylation is present at asparagine 681.

In terms of assembly, binds to the central extracellular domain of APP and inhibits beta-secretase cleavage of APP.

Its subcellular location is the secreted. It is found in the extracellular space. The protein localises to the extracellular matrix. Its function is as follows. Cell adhesion protein that promotes the attachment of spinal cord and sensory neuron cells and the outgrowth of neurites in vitro. May contribute to the growth and guidance of axons in both the spinal cord and the PNS. Major factor for vascular smooth muscle cell. This chain is Spondin-1 (SPON1), found in Bos taurus (Bovine).